We begin with the raw amino-acid sequence, 64 residues long: Large ribosomal subunit protein bL35 (64 aa).

Disordered stretches follow at residues 1-22 (MPKA…TGKI) and 34-64 (EHKP…LLNG). The segment covering 34-48 (EHKPSTRTRRLDGHT) has biased composition (basic and acidic residues). Over residues 50-64 (VSANDTQRVNSLLNG) the composition is skewed to polar residues.

Belongs to the bacterial ribosomal protein bL35 family.

The sequence is that of Large ribosomal subunit protein bL35 from Mycobacterium leprae (strain Br4923).